Here is a 204-residue protein sequence, read N- to C-terminus: Dephospho-CoA kinase (204 aa).

In terms of domain architecture, DPCK spans 5–204 (VVGLTGGIGS…YLANLVKAML (200 aa)). An ATP-binding site is contributed by 13 to 18 (GSGKSA).

Belongs to the CoaE family.

It is found in the cytoplasm. The enzyme catalyses 3'-dephospho-CoA + ATP = ADP + CoA + H(+). Its pathway is cofactor biosynthesis; coenzyme A biosynthesis; CoA from (R)-pantothenate: step 5/5. Functionally, catalyzes the phosphorylation of the 3'-hydroxyl group of dephosphocoenzyme A to form coenzyme A. This Chromobacterium violaceum (strain ATCC 12472 / DSM 30191 / JCM 1249 / CCUG 213 / NBRC 12614 / NCIMB 9131 / NCTC 9757 / MK) protein is Dephospho-CoA kinase.